The primary structure comprises 197 residues: Dephospho-CoA kinase (197 aa).

Residues 2–197 form the DPCK domain; sequence IIGLTGGIAS…GAIKDLANLV (196 aa). Residue 10-15 coordinates ATP; it reads ASGKST.

Belongs to the CoaE family.

It is found in the cytoplasm. The enzyme catalyses 3'-dephospho-CoA + ATP = ADP + CoA + H(+). It functions in the pathway cofactor biosynthesis; coenzyme A biosynthesis; CoA from (R)-pantothenate: step 5/5. Functionally, catalyzes the phosphorylation of the 3'-hydroxyl group of dephosphocoenzyme A to form coenzyme A. This Streptococcus thermophilus (strain ATCC BAA-250 / LMG 18311) protein is Dephospho-CoA kinase.